Consider the following 429-residue polypeptide: Aspartate--tRNA(Asp/Asn) ligase (429 aa).

E166 is an L-aspartate binding site. The interval 188–191 (QLYK) is aspartate. An L-aspartate-binding site is contributed by R210. Residues 210 to 212 (RAE), 218 to 220 (RHL), and E352 contribute to the ATP site. Mg(2+)-binding residues include E352 and S355. S355 and R359 together coordinate L-aspartate. 400–403 (GAER) lines the ATP pocket.

Belongs to the class-II aminoacyl-tRNA synthetase family. Type 2 subfamily. In terms of assembly, homodimer. It depends on Mg(2+) as a cofactor.

The protein resides in the cytoplasm. The enzyme catalyses tRNA(Asx) + L-aspartate + ATP = L-aspartyl-tRNA(Asx) + AMP + diphosphate. Functionally, aspartyl-tRNA synthetase with relaxed tRNA specificity since it is able to aspartylate not only its cognate tRNA(Asp) but also tRNA(Asn). Reaction proceeds in two steps: L-aspartate is first activated by ATP to form Asp-AMP and then transferred to the acceptor end of tRNA(Asp/Asn). The protein is Aspartate--tRNA(Asp/Asn) ligase of Methanocorpusculum labreanum (strain ATCC 43576 / DSM 4855 / Z).